Consider the following 514-residue polypeptide: F-box-like/WD repeat-containing protein TBL1XR1 (514 aa).

Ser2 carries the post-translational modification N-acetylserine. The region spanning 4-36 (SSDEVNFLVYRYLQESGFSHSAFTFGIESHISQ) is the LisH domain. Residues 41-86 (GALVPPAALISIIQKGLQYVEAEVSINEDGTLFDGRPIESLSLIDA) form the F-box-like domain. The residue at position 102 (Lys102) is an N6-acetyllysine. Ser119 is subject to Phosphoserine. Low complexity predominate over residues 120–135 (QQGSAKNGENTANGEE). The disordered stretch occupies residues 120-139 (QQGSAKNGENTANGEENGAH). WD repeat units follow at residues 167–206 (GHES…TSGS), 223–262 (PSNK…ASTL), 264–303 (QHKG…AKQQ), 306–344 (FHSA…PIKT), 347–386 (GHTN…CVHD), 389–437 (AHNK…CIHT), 440–479 (KHQE…LVHS), and 481–513 (RGTG…LDLR). Lys277 participates in a covalent cross-link: Glycyl lysine isopeptide (Lys-Gly) (interchain with G-Cter in SUMO2).

This sequence belongs to the WD repeat EBI family. In terms of assembly, component of the N-Cor repressor complex, at least composed of NCOR1, NCOR2, HDAC3, TBL1X, TBL1XR1, CORO2A and GPS2. Probable component of some E3 ubiquitin ligase complex. Interacts with histones H2B and H4. Interacts with MECP2; bridges interaction between MECP2 and NCOR1. Interacts with USP44. Widely expressed including the pituitary, hypothalamus, white and brown adipose tissue, muscle and liver.

It localises to the nucleus. Functionally, F-box-like protein involved in the recruitment of the ubiquitin/19S proteasome complex to nuclear receptor-regulated transcription units. Plays an essential role in transcription activation mediated by nuclear receptors. Probably acts as integral component of the N-Cor corepressor complex that mediates the recruitment of the 19S proteasome complex, leading to the subsequent proteasomal degradation of N-Cor complex, thereby allowing cofactor exchange, and transcription activation. The polypeptide is F-box-like/WD repeat-containing protein TBL1XR1 (TBL1XR1) (Homo sapiens (Human)).